Consider the following 242-residue polypeptide: DNA repair protein RecO (242 aa).

Belongs to the RecO family. As to quaternary structure, monomer.

Its function is as follows. Involved in DNA repair and RecF pathway recombination. The protein is DNA repair protein RecO of Salmonella gallinarum (strain 287/91 / NCTC 13346).